Consider the following 36-residue polypeptide: Potassium channel toxin alpha-KTx 2.7 (36 aa).

Intrachain disulfides connect cysteine 7-cysteine 29, cysteine 13-cysteine 34, and cysteine 17-cysteine 36.

This sequence belongs to the short scorpion toxin superfamily. Potassium channel inhibitor family. Alpha-KTx 02 subfamily. In terms of tissue distribution, expressed by the venom gland.

The protein resides in the secreted. Inhibitor of voltage-gated potassium channels (Kv). This protein is capable of displacing the binding of radio-labeled noxiustoxin (AC P08815) to rat brain synaptosomes with high affinity (about 100 pM). It is also capable of inhibiting transient potassium-currents (resembling I(A)-type currents), in cultured rat cerebellar granule cells. About 50% of the peak currents are reduced by application of a 1.5 uM solution of this toxin. Is lethal to mice (when less than 100 ug are injected). This Centruroides limpidus (Mexican scorpion) protein is Potassium channel toxin alpha-KTx 2.7.